Here is a 199-residue protein sequence, read N- to C-terminus: GTP cyclohydrolase-2 (199 aa).

Residue 49 to 53 (RVHSE) participates in GTP binding. The Zn(2+) site is built by Cys-54, Cys-65, and Cys-67. GTP-binding positions include Gln-70, 92 to 94 (EGR), and Thr-114. Residue Asp-126 is the Proton acceptor of the active site. The active-site Nucleophile is Arg-128. Residues Thr-149 and Lys-154 each contribute to the GTP site.

Belongs to the GTP cyclohydrolase II family. The cofactor is Zn(2+).

It catalyses the reaction GTP + 4 H2O = 2,5-diamino-6-hydroxy-4-(5-phosphoribosylamino)-pyrimidine + formate + 2 phosphate + 3 H(+). It participates in cofactor biosynthesis; riboflavin biosynthesis; 5-amino-6-(D-ribitylamino)uracil from GTP: step 1/4. Catalyzes the conversion of GTP to 2,5-diamino-6-ribosylamino-4(3H)-pyrimidinone 5'-phosphate (DARP), formate and pyrophosphate. The polypeptide is GTP cyclohydrolase-2 (Baumannia cicadellinicola subsp. Homalodisca coagulata).